The primary structure comprises 97 residues: NADH-ubiquinone oxidoreductase chain 4L (97 aa).

A run of 3 helical transmembrane segments spans residues 1 to 21 (MSMF…YVFC), 28 to 48 (LVVL…IVLF), and 57 to 77 (FFPV…LSIL).

This sequence belongs to the complex I subunit 4L family.

It is found in the mitochondrion membrane. The catalysed reaction is a ubiquinone + NADH + 5 H(+)(in) = a ubiquinol + NAD(+) + 4 H(+)(out). Functionally, core subunit of the mitochondrial membrane respiratory chain NADH dehydrogenase (Complex I) that is believed to belong to the minimal assembly required for catalysis. Complex I functions in the transfer of electrons from NADH to the respiratory chain. The immediate electron acceptor for the enzyme is believed to be ubiquinone. The protein is NADH-ubiquinone oxidoreductase chain 4L (ND4L) of Locusta migratoria (Migratory locust).